A 154-amino-acid chain; its full sequence is Histone H2B.v3 (154 aa).

The span at 1–11 (MVFVKGQKKAT) shows a compositional bias: basic residues. Residues 1 to 48 (MVFVKGQKKATKGSTQSGEEKTASTTPKVTKTPTEGGEKKRKKRKSDY) form a disordered region. A compositionally biased stretch (polar residues) spans 12–27 (KGSTQSGEEKTASTTP).

It belongs to the histone H2B family. As to quaternary structure, the nucleosome is a histone octamer containing two molecules each of H2A, H2B, H3 and H4 assembled in one H3-H4 heterotetramer and two H2A-H2B heterodimers. The octamer wraps approximately 147 bp of DNA.

The protein localises to the nucleus. It is found in the chromosome. In terms of biological role, core component of nucleosome which plays a central role in DNA double strand break (DSB) repair. Nucleosomes wrap and compact DNA into chromatin, limiting DNA accessibility to the cellular machineries which require DNA as a template. Histones thereby play a central role in transcription regulation, DNA repair, DNA replication and chromosomal stability. DNA accessibility is regulated via a complex set of post-translational modifications of histones, also called histone code, and nucleosome remodeling. The polypeptide is Histone H2B.v3 (H2Bv3) (Dictyostelium discoideum (Social amoeba)).